The sequence spans 267 residues: 4-hydroxy-tetrahydrodipicolinate reductase (267 aa).

Gly-10 to Gln-15 lines the NAD(+) pocket. Arg-37 lines the NADP(+) pocket. NAD(+)-binding positions include Gly-99 to Thr-101 and Thr-122 to Val-125. Catalysis depends on His-154, which acts as the Proton donor/acceptor. Residue His-155 coordinates (S)-2,3,4,5-tetrahydrodipicolinate. Lys-158 serves as the catalytic Proton donor. Gly-164–Thr-165 is a (S)-2,3,4,5-tetrahydrodipicolinate binding site.

This sequence belongs to the DapB family.

It is found in the cytoplasm. It catalyses the reaction (S)-2,3,4,5-tetrahydrodipicolinate + NAD(+) + H2O = (2S,4S)-4-hydroxy-2,3,4,5-tetrahydrodipicolinate + NADH + H(+). The enzyme catalyses (S)-2,3,4,5-tetrahydrodipicolinate + NADP(+) + H2O = (2S,4S)-4-hydroxy-2,3,4,5-tetrahydrodipicolinate + NADPH + H(+). It functions in the pathway amino-acid biosynthesis; L-lysine biosynthesis via DAP pathway; (S)-tetrahydrodipicolinate from L-aspartate: step 4/4. Its function is as follows. Catalyzes the conversion of 4-hydroxy-tetrahydrodipicolinate (HTPA) to tetrahydrodipicolinate. The chain is 4-hydroxy-tetrahydrodipicolinate reductase from Ehrlichia chaffeensis (strain ATCC CRL-10679 / Arkansas).